The sequence spans 198 residues: Small ribosomal subunit protein eS1 (198 aa).

Belongs to the eukaryotic ribosomal protein eS1 family.

The polypeptide is Small ribosomal subunit protein eS1 (Methanospirillum hungatei JF-1 (strain ATCC 27890 / DSM 864 / NBRC 100397 / JF-1)).